The following is a 364-amino-acid chain: tRNA 2-selenouridine synthase (364 aa).

The Rhodanese domain occupies 14 to 137; it reads LIADTPIIDV…LRQTAIQATI (124 aa). Catalysis depends on Cys97, which acts as the S-selanylcysteine intermediate.

The protein belongs to the SelU family. In terms of assembly, monomer.

The catalysed reaction is 5-methylaminomethyl-2-thiouridine(34) in tRNA + selenophosphate + (2E)-geranyl diphosphate + H2O + H(+) = 5-methylaminomethyl-2-selenouridine(34) in tRNA + (2E)-thiogeraniol + phosphate + diphosphate. It catalyses the reaction 5-methylaminomethyl-2-thiouridine(34) in tRNA + (2E)-geranyl diphosphate = 5-methylaminomethyl-S-(2E)-geranyl-thiouridine(34) in tRNA + diphosphate. It carries out the reaction 5-methylaminomethyl-S-(2E)-geranyl-thiouridine(34) in tRNA + selenophosphate + H(+) = 5-methylaminomethyl-2-(Se-phospho)selenouridine(34) in tRNA + (2E)-thiogeraniol. The enzyme catalyses 5-methylaminomethyl-2-(Se-phospho)selenouridine(34) in tRNA + H2O = 5-methylaminomethyl-2-selenouridine(34) in tRNA + phosphate. In terms of biological role, involved in the post-transcriptional modification of the uridine at the wobble position (U34) of tRNA(Lys), tRNA(Glu) and tRNA(Gln). Catalyzes the conversion of 2-thiouridine (S2U-RNA) to 2-selenouridine (Se2U-RNA). Acts in a two-step process involving geranylation of 2-thiouridine (S2U) to S-geranyl-2-thiouridine (geS2U) and subsequent selenation of the latter derivative to 2-selenouridine (Se2U) in the tRNA chain. The sequence is that of tRNA 2-selenouridine synthase from Escherichia coli (strain SE11).